The chain runs to 393 residues: Tryptophan synthase beta chain (393 aa).

Lys85 is subject to N6-(pyridoxal phosphate)lysine.

Belongs to the TrpB family. Tetramer of two alpha and two beta chains. Pyridoxal 5'-phosphate is required as a cofactor.

It carries out the reaction (1S,2R)-1-C-(indol-3-yl)glycerol 3-phosphate + L-serine = D-glyceraldehyde 3-phosphate + L-tryptophan + H2O. It functions in the pathway amino-acid biosynthesis; L-tryptophan biosynthesis; L-tryptophan from chorismate: step 5/5. In terms of biological role, the beta subunit is responsible for the synthesis of L-tryptophan from indole and L-serine. This Helicobacter pylori (strain ATCC 700392 / 26695) (Campylobacter pylori) protein is Tryptophan synthase beta chain (trpB).